The sequence spans 620 residues: Sodium-dependent dopamine transporter (620 aa).

The Cytoplasmic segment spans residues 1–56; it reads MSKSKCSVGLMSSVVAPAKEPNAMGPKEVELILVKEQNGVQLTSSTLTNPRQSPVE. Residues 57 to 95 traverse the membrane as a discontinuously helical segment; the sequence is AQDRETWGKKIDFLLSVIGFAVDLANVWRFPYLCYKNGG. Na(+) contacts are provided by Gly-75, Ala-77, Val-78, Asp-79, and Asn-82. Dopamine is bound at residue Asp-79. Transmembrane regions (helical) follow at residues 96-127 and 128-171; these read GAFL…NREG and AAGV…FSSF. The dopamine site is built by Ser-149 and Gly-153. Over 172 to 236 the chain is Extracellular; the sequence is TTELPWIHCN…SHGIDDLGPP (65 aa). Cys-180 and Cys-189 are disulfide-bonded. 3 N-linked (GlcNAc...) asparagine glycosylation sites follow: Asn-181, Asn-188, and Asn-205. 2 consecutive transmembrane segments (helical) span residues 237 to 256 and 257 to 287; these read RWQL…FSLW and KGVK…GVTL. Residues 288–306 lie on the Extracellular side of the membrane; sequence PGAIDGIRAYLSVDFYRLC. The chain crosses the membrane as a discontinuously helical span at residues 307–335; sequence EASVWIDAATQVCFSLGVGFGVLIAFSSY. Chloride is bound at residue Gln-317. Residue Phe-320 coordinates dopamine. Positions 321 and 353 each coordinate Na(+). Ser-321 lines the chloride pocket. Residues 336 to 376 form a helical membrane-spanning segment; that stretch reads NKFTNNCYRDAIVTTSINSLTSFSSGFVVFSFLGYMAQKHS. Ser-357 serves as a coordination point for chloride. Topologically, residues 377–400 are extracellular; sequence VPIGDVAKDGPGLIFIIYPEAIAT. 3 consecutive transmembrane segments (helical) span residues 401–442, 443–466, and 467–499; these read LPLS…QLLH, RHRE…CVTN, and GGIY…AWFY. The Na(+) site is built by Leu-418, Asp-421, and Ser-422. 2 residues coordinate dopamine: Ser-422 and Ala-423. Residues 500-516 are Cytoplasmic-facing; sequence GVGQFSDDIQQMTGQRP. The chain crosses the membrane as a helical span at residues 517–542; it reads SLYWRLCWKLVSPCFLLFVVVVSIVT. Residues 543-553 are Extracellular-facing; the sequence is FRPPHYGAYIF. The helical transmembrane segment at 554–583 threads the bilayer; that stretch reads PDWANALGWVIATSSMAMVPIYAAYKFCSL. The interaction with TGFB1I1 stretch occupies residues 561–590; that stretch reads GWVIATSSMAMVPIYAAYKFCSLPGSFREK. Residues 584–620 are Cytoplasmic-facing; that stretch reads PGSFREKLAYAIAPEKDRELVDRGEVRQFTLRHWLKV.

The protein belongs to the sodium:neurotransmitter symporter (SNF) (TC 2.A.22) family. SLC6A3 subfamily. In terms of assembly, monomer. Homooligomer; disulfide-linked. Interacts with PRKCABP and TGFB1I1. Interacts (via N-terminus) with SYNGR3 (via N-terminus). Interacts with SLC18A2. Interacts with TOR1A (ATP-bound); TOR1A regulates SLC6A3 subcellular location. Interacts with alpha-synuclein/SNCA. Interacts with SEPTIN4.

It is found in the cell membrane. The protein localises to the cell projection. It localises to the neuron projection. The protein resides in the axon. The catalysed reaction is dopamine(out) + chloride(out) + Na(+)(out) = dopamine(in) + chloride(in) + Na(+)(in). It catalyses the reaction (R)-noradrenaline(out) + chloride(out) + Na(+)(out) = (R)-noradrenaline(in) + chloride(in) + Na(+)(in). The enzyme catalyses dopamine(out) + chloride(out) + 2 Na(+)(out) = dopamine(in) + chloride(in) + 2 Na(+)(in). Its activity is regulated as follows. Inhibited by zinc ions. In terms of biological role, mediates sodium- and chloride-dependent transport of dopamine. Also mediates sodium- and chloride-dependent transport of norepinephrine (also known as noradrenaline). Regulator of light-dependent retinal hyaloid vessel regression, downstream of OPN5 signaling. In Macaca fascicularis (Crab-eating macaque), this protein is Sodium-dependent dopamine transporter (SLC6A3).